The sequence spans 173 residues: MLRASSVLPRGSWHEPAADVVVLDYDARHRRRIRMRGVRGLDFLLDLENALMLRHGDAVKLDDGRLIEIVAAPEHLVEITCPDAAKLAKIAWHLGNRHLPVEFAGTKLRIRYDPVIASMLKNFSARLREIEAPFEPEGGAYAGSGQDHHDHSHGEHTQGEHTHDEAAEPHHHG.

The interval 136 to 173 (PEGGAYAGSGQDHHDHSHGEHTQGEHTHDEAAEPHHHG) is disordered. Over residues 146–173 (QDHHDHSHGEHTQGEHTHDEAAEPHHHG) the composition is skewed to basic and acidic residues.

The protein belongs to the UreE family.

Its subcellular location is the cytoplasm. In terms of biological role, involved in urease metallocenter assembly. Binds nickel. Probably functions as a nickel donor during metallocenter assembly. The polypeptide is Urease accessory protein UreE (Beijerinckia indica subsp. indica (strain ATCC 9039 / DSM 1715 / NCIMB 8712)).